The sequence spans 217 residues: Large ribosomal subunit protein uL1 (217 aa).

A Phosphotyrosine modification is found at Tyr-11. N6-acetyllysine occurs at positions 91 and 106. Residue Lys-118 is modified to N6-acetyllysine; alternate. Lys-118 participates in a covalent cross-link: Glycyl lysine isopeptide (Lys-Gly) (interchain with G-Cter in SUMO1); alternate. Lys-118 participates in a covalent cross-link: Glycyl lysine isopeptide (Lys-Gly) (interchain with G-Cter in SUMO2); alternate. Residue Lys-161 forms a Glycyl lysine isopeptide (Lys-Gly) (interchain with G-Cter in SUMO2) linkage.

The protein belongs to the universal ribosomal protein uL1 family. In terms of assembly, component of the large ribosomal subunit.

It localises to the cytoplasm. Functionally, component of the large ribosomal subunit. The ribosome is a large ribonucleoprotein complex responsible for the synthesis of proteins in the cell. This chain is Large ribosomal subunit protein uL1 (RPL10A), found in Oryctolagus cuniculus (Rabbit).